The chain runs to 265 residues: Undecaprenyl-diphosphatase (265 aa).

7 helical membrane passes run 38-58 (RSDFFNIVIQAGAILAICLAL), 75-95 (RDYVLKVGVAFLVTAVVGLIV), 108-128 (PVAWALLIGGVWMLVAEHFAG), 135-155 (VVTWKVAIAVGLAQVVAGVFP), 181-201 (FVFMVGIPTMFAASGYALLEM), 215-235 (VAVAFVAATITGFVVVKWLLG), and 244-264 (VFAVYRMLLGAALLLWLPAAA).

It belongs to the UppP family.

It localises to the cell inner membrane. The enzyme catalyses di-trans,octa-cis-undecaprenyl diphosphate + H2O = di-trans,octa-cis-undecaprenyl phosphate + phosphate + H(+). Functionally, catalyzes the dephosphorylation of undecaprenyl diphosphate (UPP). Confers resistance to bacitracin. In Xanthomonas euvesicatoria pv. vesicatoria (strain 85-10) (Xanthomonas campestris pv. vesicatoria), this protein is Undecaprenyl-diphosphatase.